The following is a 269-amino-acid chain: Dihydropteroate synthase (269 aa).

The 248-residue stretch at 14-261 (TYIMGILNFT…DVLENSRAAK (248 aa)) folds into the Pterin-binding domain. Asn-21 serves as a coordination point for Mg(2+). (7,8-dihydropterin-6-yl)methyl diphosphate is bound by residues Thr-61, Asp-95, Asn-114, Asp-178, Lys-214, and 249 to 251 (RVH).

The protein belongs to the DHPS family. Requires Mg(2+) as cofactor.

The catalysed reaction is (7,8-dihydropterin-6-yl)methyl diphosphate + 4-aminobenzoate = 7,8-dihydropteroate + diphosphate. Its pathway is cofactor biosynthesis; tetrahydrofolate biosynthesis; 7,8-dihydrofolate from 2-amino-4-hydroxy-6-hydroxymethyl-7,8-dihydropteridine diphosphate and 4-aminobenzoate: step 1/2. Catalyzes the condensation of para-aminobenzoate (pABA) with 6-hydroxymethyl-7,8-dihydropterin diphosphate (DHPt-PP) to form 7,8-dihydropteroate (H2Pte), the immediate precursor of folate derivatives. The protein is Dihydropteroate synthase of Clostridium beijerinckii (strain ATCC 51743 / NCIMB 8052) (Clostridium acetobutylicum).